Reading from the N-terminus, the 531-residue chain is MLMSTTPYFGEVSKRRTFAIISHPDAGKTTITEKVLLFGRAIQVAGTVKGRGSNQHAKSDWMEMEKERGISVTTSVMQFPYGDCLVNLLDTPGHEDFSEDTYRTLTAVDSCLMVIDAAKGVEDRTRKLMEVTRLRDTPIVTFMNKLDREIRDPMELMDEVENELKIACSPITWPIGCGKEFKGVYHIHRDETILYTSGQGHTIQEERIIKGLDNPELDQAVGANLAAQLREELELVLGASHEFDRELFLQGELTPVFFGTALGNFGVDHMLDGLTQWAPSPMPRQAAERVVEASEEKFTGFVFKIQANMDPKHRDRIAFVRIVSGTYKQGMKMNHVRLGKQVNISDAVTFMAGDRARAEEAFAGDIIGLHNHGTIQIGDTFTQGETLKFTGIPNFAPELFRRIRLRDPLKQKQLLKGLVQLSEEGAVQVFRPLQNNDLIVGAVGVLQFDVVVSRLKSEYNVEAIYEGVNVATARWVECDDVKKFEEFKRKNQSNLALDGGDNLAYIAPTMVNLNLAQERSPEVKFRATREH.

The 270-residue stretch at S13–M282 folds into the tr-type G domain. Residues S22 to T29, D90 to H94, and N144 to D147 each bind GTP.

Belongs to the TRAFAC class translation factor GTPase superfamily. Classic translation factor GTPase family. PrfC subfamily.

It localises to the cytoplasm. Functionally, increases the formation of ribosomal termination complexes and stimulates activities of RF-1 and RF-2. It binds guanine nucleotides and has strong preference for UGA stop codons. It may interact directly with the ribosome. The stimulation of RF-1 and RF-2 is significantly reduced by GTP and GDP, but not by GMP. The polypeptide is Peptide chain release factor 3 (Vibrio cholerae serotype O1 (strain ATCC 39541 / Classical Ogawa 395 / O395)).